The sequence spans 323 residues: Elongation factor P--(R)-beta-lysine ligase (323 aa).

Position 76 to 78 (76 to 78) interacts with substrate; sequence SPE. Residues 100-102 and Asn-109 contribute to the ATP site; that span reads RNE. A substrate-binding site is contributed by Tyr-118. 242 to 243 serves as a coordination point for ATP; sequence EL. A substrate-binding site is contributed by Glu-249. Gly-298 contacts ATP.

The protein belongs to the class-II aminoacyl-tRNA synthetase family. EpmA subfamily. In terms of assembly, homodimer.

It carries out the reaction D-beta-lysine + L-lysyl-[protein] + ATP = N(6)-((3R)-3,6-diaminohexanoyl)-L-lysyl-[protein] + AMP + diphosphate + H(+). In terms of biological role, with EpmB is involved in the beta-lysylation step of the post-translational modification of translation elongation factor P (EF-P). Catalyzes the ATP-dependent activation of (R)-beta-lysine produced by EpmB, forming a lysyl-adenylate, from which the beta-lysyl moiety is then transferred to the epsilon-amino group of a conserved specific lysine residue in EF-P. This is Elongation factor P--(R)-beta-lysine ligase from Pasteurella multocida (strain Pm70).